A 301-amino-acid chain; its full sequence is MTFMEFEKLRHGTELIKRGFARMQKGGVIMDVTTPEQARIAEEAGAVAVMALQAVPADLRKAGGVARMADPEIVQQIIDTVTIPVMAKARIGHFVEAEILEALGVDMVDESEVLTPADPFYHIDKTQFTVPFVCGARNLGEALRRINEGAAMIRTKGEAGTGDVSQAVKHMKQIQGEIRALAGKTKEELIMVAREIEAPIELVVETAKMQRLPVVNFAAGGVATPADAALMMRLGADGVFVGSGIFKAENPEKMAKAVVEAVNNYDNPAKLAEISKGVGAGMKGISADMIPVQEALQERGW.

D31 is a D-ribose 5-phosphate binding site. The active-site Schiff-base intermediate with D-ribose 5-phosphate is K88. G160 contacts D-ribose 5-phosphate. K172 is a D-glyceraldehyde 3-phosphate binding site. Residues G221 and G242–S243 each bind D-ribose 5-phosphate.

It belongs to the PdxS/SNZ family. As to quaternary structure, in the presence of PdxT, forms a dodecamer of heterodimers.

It carries out the reaction aldehydo-D-ribose 5-phosphate + D-glyceraldehyde 3-phosphate + L-glutamine = pyridoxal 5'-phosphate + L-glutamate + phosphate + 3 H2O + H(+). It participates in cofactor biosynthesis; pyridoxal 5'-phosphate biosynthesis. In terms of biological role, catalyzes the formation of pyridoxal 5'-phosphate from ribose 5-phosphate (RBP), glyceraldehyde 3-phosphate (G3P) and ammonia. The ammonia is provided by the PdxT subunit. Can also use ribulose 5-phosphate and dihydroxyacetone phosphate as substrates, resulting from enzyme-catalyzed isomerization of RBP and G3P, respectively. This Methanosarcina mazei (strain ATCC BAA-159 / DSM 3647 / Goe1 / Go1 / JCM 11833 / OCM 88) (Methanosarcina frisia) protein is Pyridoxal 5'-phosphate synthase subunit PdxS.